A 250-amino-acid polypeptide reads, in one-letter code: AA9 family lytic polysaccharide monooxygenase F (250 aa).

Residues methionine 1–glycine 21 form the signal peptide. Histidine 22 is a binding site for Cu(2+). Aspartate 51 serves as a coordination point for O2. 2 disulfide bridges follow: cysteine 77–cysteine 200 and cysteine 121–cysteine 125. Histidine 107 contacts Cu(2+). Residues histidine 186 and glutamine 195 each contribute to the O2 site. Tyrosine 197 contacts Cu(2+).

The protein belongs to the glycosyl hydrolase 61 family. Requires Cu(2+) as cofactor.

The protein localises to the secreted. It catalyses the reaction Endohydrolysis of (1-&gt;4)-beta-D-glucosidic linkages in cellulose, lichenin and cereal beta-D-glucans.. Its function is as follows. Lytic polysaccharide monooxygenase (LMPO) that depolymerizes crystalline and amorphous polysaccharides via the oxidation of scissile alpha- or beta-(1-4)-glycosidic bonds, yielding C1 or C4 oxidation products. Catalysis by LPMOs requires the reduction of the active-site copper from Cu(II) to Cu(I) by a reducing agent and H(2)O(2) or O(2) as a cosubstrate. Major secreted component of the extracellular cellulolytic system. The chain is AA9 family lytic polysaccharide monooxygenase F from Emericella nidulans (strain FGSC A4 / ATCC 38163 / CBS 112.46 / NRRL 194 / M139) (Aspergillus nidulans).